The sequence spans 249 residues: Proteasome subunit alpha type-3 (249 aa).

It belongs to the peptidase T1A family. As to quaternary structure, the 26S proteasome consists of a 20S proteasome core and two 19S regulatory subunits. The 20S proteasome core is composed of 28 subunits that are arranged in four stacked rings, resulting in a barrel-shaped structure. The two end rings are each formed by seven alpha subunits, and the two central rings are each formed by seven beta subunits. The catalytic chamber with the active sites is on the inside of the barrel.

Its subcellular location is the cytoplasm. The protein localises to the nucleus. Functionally, the proteasome is a multicatalytic proteinase complex which is characterized by its ability to cleave peptides with Arg, Phe, Tyr, Leu, and Glu adjacent to the leaving group at neutral or slightly basic pH. The proteasome has an ATP-dependent proteolytic activity. This Spinacia oleracea (Spinach) protein is Proteasome subunit alpha type-3 (PAG1).